A 318-amino-acid polypeptide reads, in one-letter code: Pyrimidine-specific ribonucleoside hydrolase RihA (318 aa).

His240 is an active-site residue.

The protein belongs to the IUNH family. RihA subfamily.

Functionally, hydrolyzes cytidine or uridine to ribose and cytosine or uracil, respectively. This is Pyrimidine-specific ribonucleoside hydrolase RihA from Shewanella sp. (strain MR-7).